Reading from the N-terminus, the 84-residue chain is Putative membrane protein insertion efficiency factor (84 aa).

Belongs to the UPF0161 family.

It is found in the cell inner membrane. In terms of biological role, could be involved in insertion of integral membrane proteins into the membrane. This chain is Putative membrane protein insertion efficiency factor, found in Shewanella frigidimarina (strain NCIMB 400).